The chain runs to 893 residues: 26S proteasome non-ATPase regulatory subunit 2 (893 aa).

Residues 1–59 (MPQKEVTIPVPAKGGSNKEEDKKDNKDTEEKNTTTNTTTKDNKKDKKKDKKEETLSPED) are disordered. 2 stretches are compositionally biased toward basic and acidic residues: residues 16–32 (SNKE…EEKN) and 40–59 (KDNK…SPED). PC repeat units follow at residues 412-445 (STVA…HCSN), 446-482 (GALM…GTRI), 483-517 (SAIF…KMEF), 522-555 (GLAL…ASES), 562-583 (LGLG…ETLK), 666-700 (AIPL…EVAQ), and 701-735 (GAIL…DVHL).

It belongs to the proteasome subunit S2 family.

Its function is as follows. Acts as a regulatory subunit of the 26 proteasome which is involved in the ATP-dependent degradation of ubiquitinated proteins. The sequence is that of 26S proteasome non-ATPase regulatory subunit 2 (psmD2) from Dictyostelium discoideum (Social amoeba).